The sequence spans 217 residues: MNQMMTFLQTNGGELLYKTGEHLYISLIAVVLGIIVAVPLGVALTRMKKGAGAVIGFVNIVQTLPSLAILAFFIPLLGVGKVPAIVALFFYSVLPILRNTYTGIKGVNKNLLESGKGIGMTGWEQIRLVEIPLAIPIIMAGIRTSTIYLIGWATLASFIGGGGLGDYIFIGLNLYQPEYIIGGAVPVTILAIIIDYVLAVTERKVTPKGLQGMKEVS.

An ABC transmembrane type-1 domain is found at 19 to 198; it reads TGEHLYISLI…ILAIIIDYVL (180 aa). The next 6 helical transmembrane spans lie at 23 to 43, 52 to 74, 84 to 101, 128 to 148, 150 to 170, and 180 to 200; these read LYISLIAVVLGIIVAVPLGVA, GAVIGFVNIVQTLPSLAILAFFI, AIVALFFYSVLPILRNTY, LVEIPLAIPIIMAGIRTSTIY, IGWATLASFIGGGGLGDYIFI, and IIGGAVPVTILAIIIDYVLAV.

This sequence belongs to the binding-protein-dependent transport system permease family. CysTW subfamily. The complex is composed of two ATP-binding proteins (OpuCA), two transmembrane proteins (OpuCB and OpuCD) and a solute-binding protein (OpuCC).

Its subcellular location is the cell membrane. In terms of biological role, involved in a high affinity multicomponent binding-protein-dependent transport system for glycine betaine, carnitine and choline; probably responsible for the translocation of the substrate across the membrane. The polypeptide is Glycine betaine/carnitine/choline transport system permease protein OpuCB (opuCB) (Bacillus subtilis (strain 168)).